Here is a 273-residue protein sequence, read N- to C-terminus: 2,3,4,5-tetrahydropyridine-2,6-dicarboxylate N-succinyltransferase (273 aa).

2 residues coordinate substrate: arginine 104 and aspartate 141.

This sequence belongs to the transferase hexapeptide repeat family. As to quaternary structure, homotrimer.

It is found in the cytoplasm. The catalysed reaction is (S)-2,3,4,5-tetrahydrodipicolinate + succinyl-CoA + H2O = (S)-2-succinylamino-6-oxoheptanedioate + CoA. It functions in the pathway amino-acid biosynthesis; L-lysine biosynthesis via DAP pathway; LL-2,6-diaminopimelate from (S)-tetrahydrodipicolinate (succinylase route): step 1/3. The chain is 2,3,4,5-tetrahydropyridine-2,6-dicarboxylate N-succinyltransferase from Psychrobacter sp. (strain PRwf-1).